The chain runs to 1820 residues: Cation channel sperm-associated targeting subunit tau (1820 aa).

A C2 domain is found at 87-222; the sequence is DSEELEITQE…QKGCFIEEVQ (136 aa). 4 disordered regions span residues 360 to 383, 403 to 443, 695 to 722, and 838 to 857; these read SEET…ELEN, LLDN…TEVH, EVSM…SSME, and SSTK…SGSS. Residues 415–443 show a composition bias toward polar residues; that stretch reads PTLNQSDQDNSTADASKNDESTPSPTEVH.

As to quaternary structure, component of the CatSper complex or CatSpermasome composed of the core pore-forming members CATSPER1, CATSPER2, CATSPER3 and CATSPER4 as well as auxiliary members CATSPERB, CATSPERG, CATSPERD, CATSPERE, CATSPERZ, C2CD6/CATSPERT, TMEM249, TMEM262 and EFCAB9. HSPA1 may be an additional auxiliary complex member. The core complex members CATSPER1, CATSPER2, CATSPER3 and CATSPER4 form a heterotetrameric channel. The auxiliary CATSPERB, CATSPERG, CATSPERD and CATSPERE subunits form a pavilion-like structure over the pore which stabilizes the complex through interactions with CATSPER4, CATSPER3, CATSPER1 and CATSPER2 respectively. SLCO6C1 interacts with CATSPERE and TMEM262/CATSPERH interacts with CATSPERB, further stabilizing the complex. C2CD6/CATSPERT interacts at least with CATSPERD and is required for targeting the CatSper complex in the flagellar membrane. As to expression, expressed in testis (at protein level).

It is found in the cell projection. Its subcellular location is the cilium. It localises to the flagellum membrane. Auxiliary component of the CatSper complex, a complex involved in sperm cell hyperactivation. Sperm cell hyperactivation is needed for sperm motility which is essential late in the preparation of sperm for fertilization. Required for CatSper complex targeting and trafficking into the quadrilinear nanodomains. Targets the preassembled CatSper complexes to elongating flagella, where it links the channel-carrying vesicles and motor proteins. The polypeptide is Cation channel sperm-associated targeting subunit tau (Homo sapiens (Human)).